A 249-amino-acid chain; its full sequence is Phosphatidylglycerol--prolipoprotein diacylglyceryl transferase (249 aa).

7 helical membrane passes run 11 to 31 (LKIYGYGAMIALGILAAVILL), 49 to 69 (AIVGIIGGILGGKLLYIIVDI), 82 to 102 (LGNGFVIYGAIIGGAISVYLY), 116 to 136 (LVVPSVALAQGFGRIGCFLAG), 163 to 183 (LHPTQIYSSIFDFLLAFFLLW), 192 to 212 (GRVFSLYVIIYGVGRVIVEFL), and 223 to 243 (LSTSQFISLFTIIIGIFVFNI). Arg-129 provides a ligand contact to a 1,2-diacyl-sn-glycero-3-phospho-(1'-sn-glycerol).

It belongs to the Lgt family.

Its subcellular location is the cell membrane. It catalyses the reaction L-cysteinyl-[prolipoprotein] + a 1,2-diacyl-sn-glycero-3-phospho-(1'-sn-glycerol) = an S-1,2-diacyl-sn-glyceryl-L-cysteinyl-[prolipoprotein] + sn-glycerol 1-phosphate + H(+). The protein operates within protein modification; lipoprotein biosynthesis (diacylglyceryl transfer). Catalyzes the transfer of the diacylglyceryl group from phosphatidylglycerol to the sulfhydryl group of the N-terminal cysteine of a prolipoprotein, the first step in the formation of mature lipoproteins. The polypeptide is Phosphatidylglycerol--prolipoprotein diacylglyceryl transferase (Clostridium tetani (strain Massachusetts / E88)).